Reading from the N-terminus, the 105-residue chain is Precursor of CEP15 (105 aa).

The signal sequence occupies residues Met1–Ser29. The propeptide occupies Thr30–Asp90. Positions Asp68 to Ser80 are enriched in low complexity. The segment at Asp68–His105 is disordered. Hydroxyproline is present on residues Pro99 and Pro101.

It belongs to the C-terminally encoded plant signaling peptide (CEP) family. As to quaternary structure, interacts with CEP receptors (e.g. CEPR1 and CEPR2). Post-translationally, the mature small signaling peptide is generated by proteolytic processing of the longer precursor.

The protein resides in the secreted. Its subcellular location is the extracellular space. It localises to the apoplast. Functionally, extracellular signaling peptide that may regulate primary root growth rate and systemic nitrogen (N)-demand signaling. The polypeptide is Precursor of CEP15 (Arabidopsis thaliana (Mouse-ear cress)).